The sequence spans 1000 residues: Ribosome assembly protein 1 (1000 aa).

The 230-residue stretch at 17–246 (ENIRNFTLLA…YEKKLGLKQK (230 aa)) folds into the tr-type G domain. GTP-binding positions include 26–33 (AHVDHGKT), 100–104 (DSPGH), and 154–157 (NKMD).

The protein belongs to the TRAFAC class translation factor GTPase superfamily. Classic translation factor GTPase family.

Its subcellular location is the cytoplasm. It catalyses the reaction GTP + H2O = GDP + phosphate + H(+). GTPase activity is stimulated in the presence of 60S subunits. Its function is as follows. GTPase involved in the biogenesis of the 60S ribosomal subunit and translational activation of ribosomes. Together with sdo1, may trigger the GTP-dependent release of tif6 from 60S pre-ribosomes in the cytoplasm, thereby activating ribosomes for translation competence by allowing 80S ribosome assembly and facilitating tif6 recycling to the nucleus, where it is required for 60S rRNA processing and nuclear export. Inhibits GTPase activity of ribosome-bound EF-2. This is Ribosome assembly protein 1 (ria1) from Schizosaccharomyces pombe (strain 972 / ATCC 24843) (Fission yeast).